We begin with the raw amino-acid sequence, 254 residues long: Imidazole glycerol phosphate synthase subunit HisF (254 aa).

Catalysis depends on residues aspartate 11 and aspartate 130.

It belongs to the HisA/HisF family. In terms of assembly, heterodimer of HisH and HisF.

The protein localises to the cytoplasm. It carries out the reaction 5-[(5-phospho-1-deoxy-D-ribulos-1-ylimino)methylamino]-1-(5-phospho-beta-D-ribosyl)imidazole-4-carboxamide + L-glutamine = D-erythro-1-(imidazol-4-yl)glycerol 3-phosphate + 5-amino-1-(5-phospho-beta-D-ribosyl)imidazole-4-carboxamide + L-glutamate + H(+). It functions in the pathway amino-acid biosynthesis; L-histidine biosynthesis; L-histidine from 5-phospho-alpha-D-ribose 1-diphosphate: step 5/9. IGPS catalyzes the conversion of PRFAR and glutamine to IGP, AICAR and glutamate. The HisF subunit catalyzes the cyclization activity that produces IGP and AICAR from PRFAR using the ammonia provided by the HisH subunit. This chain is Imidazole glycerol phosphate synthase subunit HisF, found in Acidiphilium cryptum (strain JF-5).